Consider the following 529-residue polypeptide: Peptide chain release factor 3 (529 aa).

Residues 11-280 (SKRRTFAIIS…GLVAWAPAPM (270 aa)) form the tr-type G domain. GTP contacts are provided by residues 20–27 (SHPDAGKT), 88–92 (DTPGH), and 142–145 (NKLD).

The protein belongs to the TRAFAC class translation factor GTPase superfamily. Classic translation factor GTPase family. PrfC subfamily.

It is found in the cytoplasm. Its function is as follows. Increases the formation of ribosomal termination complexes and stimulates activities of RF-1 and RF-2. It binds guanine nucleotides and has strong preference for UGA stop codons. It may interact directly with the ribosome. The stimulation of RF-1 and RF-2 is significantly reduced by GTP and GDP, but not by GMP. The polypeptide is Peptide chain release factor 3 (Pectobacterium carotovorum subsp. carotovorum (strain PC1)).